Here is a 37-residue protein sequence, read N- to C-terminus: Conotoxin r11e (37 aa).

4 disulfide bridges follow: cysteine 2–cysteine 16, cysteine 9–cysteine 21, cysteine 15–cysteine 26, and cysteine 20–cysteine 33. 4-carboxyglutamate is present on residues glutamate 13 and glutamate 14. Residue tryptophan 34 is modified to 6'-bromotryptophan.

As to expression, expressed by the venom duct.

It localises to the secreted. Its function is as follows. Causes hyperactivity, circular motion, convulsion, urination and death, when injected into 13- to 15-day-old mice. Causes gasping, backward swimming or swimming in a vertical direction and death, when intraperitoneally injected into goldfish. The protein is Conotoxin r11e of Conus radiatus (Rayed cone).